The following is a 164-amino-acid chain: Probable Brix domain-containing ribosomal biogenesis protein (164 aa).

Positions 1-164 (MIITTSRKPS…IKTVKILDIE (164 aa)) constitute a Brix domain.

Functionally, probably involved in the biogenesis of the ribosome. This is Probable Brix domain-containing ribosomal biogenesis protein from Methanococcus maripaludis (strain DSM 14266 / JCM 13030 / NBRC 101832 / S2 / LL).